Consider the following 195-residue polypeptide: Interferon omega-2 (195 aa).

The first 23 residues, 1 to 23 (MALLPSLLTALVVYELWPCGALG), serve as a signal peptide directing secretion. Intrachain disulfides connect cysteine 24-cysteine 122 and cysteine 52-cysteine 162. Asparagine 101 is a glycosylation site (N-linked (GlcNAc...) asparagine).

Belongs to the alpha/beta interferon family.

The protein resides in the secreted. The protein is Interferon omega-2 of Equus caballus (Horse).